The chain runs to 343 residues: Probable F-box protein At1g67455 (343 aa).

One can recognise an F-box domain in the interval 1 to 46; sequence MMISDLPEDMVEEILSRVSIISLGALRWNDLSKARVICKAEARQQF.

This chain is Probable F-box protein At1g67455, found in Arabidopsis thaliana (Mouse-ear cress).